A 378-amino-acid polypeptide reads, in one-letter code: tRNA-specific 2-thiouridylase MnmA (378 aa).

ATP-binding positions include 27-34 (AMSGGVDS) and L53. The active-site Nucleophile is C121. C121 and C218 are oxidised to a cystine. ATP is bound at residue G145. The segment at 168-170 (RDQ) is interaction with tRNA. C218 serves as the catalytic Cysteine persulfide intermediate.

Belongs to the MnmA/TRMU family.

Its subcellular location is the cytoplasm. The catalysed reaction is S-sulfanyl-L-cysteinyl-[protein] + uridine(34) in tRNA + AH2 + ATP = 2-thiouridine(34) in tRNA + L-cysteinyl-[protein] + A + AMP + diphosphate + H(+). Functionally, catalyzes the 2-thiolation of uridine at the wobble position (U34) of tRNA, leading to the formation of s(2)U34. The chain is tRNA-specific 2-thiouridylase MnmA from Rhizorhabdus wittichii (strain DSM 6014 / CCUG 31198 / JCM 15750 / NBRC 105917 / EY 4224 / RW1) (Sphingomonas wittichii).